Consider the following 512-residue polypeptide: MMKESKSITQHEVERESVSSKRAIKKRLLLFKIDLFVLSFVCLQYWINYVDRVGFTNAYISGMKEDLKMVGNDLTVSNTVFMIGYIVGMVPNNLMLLCVPPRIWLSFCTFAWGLLTLGMYKVTSFKHICAIRFFQALFESCTFSGTHFVLGSWYKEDELPIRSAIFTGSGLVGSMFSGFMQTSIFTHLNGRNGLAGWRWLFIIDFCITLPIAIYGFIFFPGLPDQTSAVSKFSMTRYIFNEQELHYARRRLPARDESTRLDWSTIPRVLKRWHWWMFSLVWVLGGENLGFASNSTFALWLQNQKYTLAQRNNYPSGIFAVGIVSTLCSAVYMSKIPRARHWHVSVFISLVMVIVAVLIRADPLNPKVVFSAQYLGGVAYAGQAVFFSWANIICHADLQERAIVLASMNMFSGAVNAWWSILFFASDMVPKFERGCYALLATAISSGIVSVVIRSLQIKENLSKKQVPYIDANDMPGEDDDDDNQDNENDGDDESMEVELHNEEMAEISNPFR.

Topologically, residues 1 to 27 (MMKESKSITQHEVERESVSSKRAIKKR) are cytoplasmic. Residues 28–48 (LLLFKIDLFVLSFVCLQYWIN) form a helical membrane-spanning segment. Topologically, residues 49-79 (YVDRVGFTNAYISGMKEDLKMVGNDLTVSNT) are extracellular. A helical transmembrane segment spans residues 80–100 (VFMIGYIVGMVPNNLMLLCVP). Topologically, residues 101 to 102 (PR) are cytoplasmic. A helical transmembrane segment spans residues 103–123 (IWLSFCTFAWGLLTLGMYKVT). The Extracellular segment spans residues 124–132 (SFKHICAIR). Residues 133–153 (FFQALFESCTFSGTHFVLGSW) traverse the membrane as a helical segment. Residues 154–164 (YKEDELPIRSA) lie on the Cytoplasmic side of the membrane. Residues 165–185 (IFTGSGLVGSMFSGFMQTSIF) traverse the membrane as a helical segment. Residues 186-198 (THLNGRNGLAGWR) are Extracellular-facing. The chain crosses the membrane as a helical span at residues 199–219 (WLFIIDFCITLPIAIYGFIFF). Over 220-271 (PGLPDQTSAVSKFSMTRYIFNEQELHYARRRLPARDESTRLDWSTIPRVLKR) the chain is Cytoplasmic. Residues 272–292 (WHWWMFSLVWVLGGENLGFAS) traverse the membrane as a helical segment. Over 293-312 (NSTFALWLQNQKYTLAQRNN) the chain is Extracellular. A helical transmembrane segment spans residues 313–333 (YPSGIFAVGIVSTLCSAVYMS). At 334-342 (KIPRARHWH) the chain is on the cytoplasmic side. A helical transmembrane segment spans residues 343 to 363 (VSVFISLVMVIVAVLIRADPL). At 364–372 (NPKVVFSAQ) the chain is on the extracellular side. A helical transmembrane segment spans residues 373–393 (YLGGVAYAGQAVFFSWANIIC). At 394 to 401 (HADLQERA) the chain is on the cytoplasmic side. The helical transmembrane segment at 402–422 (IVLASMNMFSGAVNAWWSILF) threads the bilayer. Residues 423–434 (FASDMVPKFERG) lie on the Extracellular side of the membrane. Residues 435–455 (CYALLATAISSGIVSVVIRSL) traverse the membrane as a helical segment. Residues 456 to 512 (QIKENLSKKQVPYIDANDMPGEDDDDDNQDNENDGDDESMEVELHNEEMAEISNPFR) are Cytoplasmic-facing. A disordered region spans residues 468 to 512 (YIDANDMPGEDDDDDNQDNENDGDDESMEVELHNEEMAEISNPFR). Positions 475 to 496 (PGEDDDDDNQDNENDGDDESME) are enriched in acidic residues.

It belongs to the major facilitator superfamily. Allantoate permease family.

It is found in the cell membrane. Transports pantothenate into the cell. Also involved in the catabolite repression-mediated regulation of ergosterol biosynthesis and in fenpropimorph resistance. This is Pantothenate transporter FEN2 (FEN2) from Saccharomyces cerevisiae (strain ATCC 204508 / S288c) (Baker's yeast).